The chain runs to 497 residues: Acetyl-coenzyme A carboxylase carboxyl transferase subunit beta, chloroplastic (497 aa).

The 268-residue stretch at 230–497 (LWIQCENCYG…FFPLNQNSIK (268 aa)) folds into the CoA carboxyltransferase N-terminal domain. The Zn(2+) site is built by C234, C237, C253, and C256. The C4-type zinc finger occupies 234–256 (CENCYGLNYKKFFRSKMNICEQC).

The protein belongs to the AccD/PCCB family. Acetyl-CoA carboxylase is a heterohexamer composed of biotin carboxyl carrier protein, biotin carboxylase and 2 subunits each of ACCase subunit alpha and ACCase plastid-coded subunit beta (accD). The cofactor is Zn(2+).

The protein localises to the plastid. The protein resides in the chloroplast stroma. The catalysed reaction is N(6)-carboxybiotinyl-L-lysyl-[protein] + acetyl-CoA = N(6)-biotinyl-L-lysyl-[protein] + malonyl-CoA. It functions in the pathway lipid metabolism; malonyl-CoA biosynthesis; malonyl-CoA from acetyl-CoA: step 1/1. In terms of biological role, component of the acetyl coenzyme A carboxylase (ACC) complex. Biotin carboxylase (BC) catalyzes the carboxylation of biotin on its carrier protein (BCCP) and then the CO(2) group is transferred by the transcarboxylase to acetyl-CoA to form malonyl-CoA. The sequence is that of Acetyl-coenzyme A carboxylase carboxyl transferase subunit beta, chloroplastic from Platanus occidentalis (Sycamore).